A 683-amino-acid polypeptide reads, in one-letter code: DNA ligase (683 aa).

NAD(+) contacts are provided by residues 35-39 (DAEYD), 81-82 (SL), and E112. Residue K114 is the N6-AMP-lysine intermediate of the active site. NAD(+) is bound by residues R135, E170, K277, and K301. Residues C395, C398, C411, and C417 each contribute to the Zn(2+) site. In terms of domain architecture, BRCT spans 601-683 (SSNSVLNNKV…YRMINSEVSE (83 aa)).

The protein belongs to the NAD-dependent DNA ligase family. LigA subfamily. It depends on Mg(2+) as a cofactor. Mn(2+) serves as cofactor.

It carries out the reaction NAD(+) + (deoxyribonucleotide)n-3'-hydroxyl + 5'-phospho-(deoxyribonucleotide)m = (deoxyribonucleotide)n+m + AMP + beta-nicotinamide D-nucleotide.. Functionally, DNA ligase that catalyzes the formation of phosphodiester linkages between 5'-phosphoryl and 3'-hydroxyl groups in double-stranded DNA using NAD as a coenzyme and as the energy source for the reaction. It is essential for DNA replication and repair of damaged DNA. This chain is DNA ligase, found in Wolbachia sp. subsp. Brugia malayi (strain TRS).